Here is a 243-residue protein sequence, read N- to C-terminus: Glucosamine-6-phosphate deaminase (243 aa).

The active-site Proton acceptor; for enolization step is the Asp67. The For ring-opening step role is filled by Asn137. His139 acts as the Proton acceptor; for ring-opening step in catalysis. The active-site For ring-opening step is Glu144.

It belongs to the glucosamine/galactosamine-6-phosphate isomerase family. NagB subfamily.

It carries out the reaction alpha-D-glucosamine 6-phosphate + H2O = beta-D-fructose 6-phosphate + NH4(+). It functions in the pathway amino-sugar metabolism; N-acetylneuraminate degradation; D-fructose 6-phosphate from N-acetylneuraminate: step 5/5. In terms of biological role, catalyzes the reversible isomerization-deamination of glucosamine 6-phosphate (GlcN6P) to form fructose 6-phosphate (Fru6P) and ammonium ion. The chain is Glucosamine-6-phosphate deaminase from Staphylococcus epidermidis (strain ATCC 12228 / FDA PCI 1200).